A 542-amino-acid chain; its full sequence is Chaperonin GroEL (542 aa).

ATP is bound by residues 29 to 32 (TLGP), 86 to 90 (DGTTT), Gly-413, 476 to 478 (NAA), and Asp-492.

This sequence belongs to the chaperonin (HSP60) family. As to quaternary structure, forms a cylinder of 14 subunits composed of two heptameric rings stacked back-to-back. Interacts with the co-chaperonin GroES.

It is found in the cytoplasm. The catalysed reaction is ATP + H2O + a folded polypeptide = ADP + phosphate + an unfolded polypeptide.. Its function is as follows. Together with its co-chaperonin GroES, plays an essential role in assisting protein folding. The GroEL-GroES system forms a nano-cage that allows encapsulation of the non-native substrate proteins and provides a physical environment optimized to promote and accelerate protein folding. This is Chaperonin GroEL from Lactococcus lactis subsp. lactis (strain IL1403) (Streptococcus lactis).